Consider the following 1070-residue polypeptide: DNA-directed RNA polymerase subunit beta (1070 aa).

The protein belongs to the RNA polymerase beta chain family. In terms of assembly, in plastids the minimal PEP RNA polymerase catalytic core is composed of four subunits: alpha, beta, beta', and beta''. When a (nuclear-encoded) sigma factor is associated with the core the holoenzyme is formed, which can initiate transcription.

It is found in the plastid. It localises to the chloroplast. It catalyses the reaction RNA(n) + a ribonucleoside 5'-triphosphate = RNA(n+1) + diphosphate. In terms of biological role, DNA-dependent RNA polymerase catalyzes the transcription of DNA into RNA using the four ribonucleoside triphosphates as substrates. The chain is DNA-directed RNA polymerase subunit beta from Buxus microphylla (Littleleaf boxwood).